Reading from the N-terminus, the 338-residue chain is tRNA N6-adenosine threonylcarbamoyltransferase (338 aa).

Residues histidine 111 and histidine 115 each coordinate Fe cation. Residues 134-138, aspartate 167, glycine 180, and asparagine 272 contribute to the substrate site; that span reads LVSGG. Residue aspartate 300 coordinates Fe cation.

Belongs to the KAE1 / TsaD family. Fe(2+) serves as cofactor.

Its subcellular location is the cytoplasm. It catalyses the reaction L-threonylcarbamoyladenylate + adenosine(37) in tRNA = N(6)-L-threonylcarbamoyladenosine(37) in tRNA + AMP + H(+). Required for the formation of a threonylcarbamoyl group on adenosine at position 37 (t(6)A37) in tRNAs that read codons beginning with adenine. Is involved in the transfer of the threonylcarbamoyl moiety of threonylcarbamoyl-AMP (TC-AMP) to the N6 group of A37, together with TsaE and TsaB. TsaD likely plays a direct catalytic role in this reaction. This Shewanella baltica (strain OS223) protein is tRNA N6-adenosine threonylcarbamoyltransferase.